A 119-amino-acid chain; its full sequence is uncharacterized protein (119 aa).

Positions 63-104 form a coiled coil; sequence KKIKKELESNSEKRKAALQMIKEEHTAKVDRYKMIIEDLRQQ.

This is an uncharacterized protein from Bacillus subtilis (strain 168).